Consider the following 217-residue polypeptide: uncharacterized protein (217 aa).

An N-terminal signal peptide occupies residues 1–32 (MPITKATPLFLRYRLKGFVFLTLLLVQGVFTA). A lipid anchor (N-palmitoyl cysteine) is attached at Cys33. A lipid anchor (S-diacylglycerol cysteine) is attached at Cys33.

Belongs to the MG067/MG068/MG395 family.

It is found in the cell membrane. This is an uncharacterized protein from Mycoplasma pneumoniae (strain ATCC 29342 / M129 / Subtype 1) (Mycoplasmoides pneumoniae).